The primary structure comprises 354 residues: Galectin-9 (354 aa).

2 consecutive Galectin domains span residues phenylalanine 17–glutamine 147 and phenylalanine 226–threonine 354. A beta-D-galactoside-binding positions include asparagine 47, histidine 60, arginine 64, asparagine 74, tryptophan 81–lysine 87, histidine 266, arginine 270, threonine 280, and tryptophan 286–serine 292.

As to expression, the isoform Long is expressed exclusively in the small intestine.

It is found in the cytoplasm. Its subcellular location is the nucleus. The protein localises to the secreted. Its function is as follows. Binds galactosides. Has high affinity for the Forssman pentasaccharide. Ligand for HAVCR2/TIM3. Binding to HAVCR2 induces T-helper type 1 lymphocyte (Th1) death. Also stimulates bactericidal activity in infected macrophages by causing macrophage activation and IL1B secretion which restricts intracellular bacterial growth. Ligand for P4HB; the interaction retains P4HB at the cell surface of Th2 T helper cells, increasing disulfide reductase activity at the plasma membrane, altering the plasma membrane redox state and enhancing cell migration. Ligand for CD44; the interaction enhances binding of SMAD3 to the FOXP3 promoter, leading to up-regulation of FOXP3 expression and increased induced regulatory T (iTreg) cell stability and suppressive function. Promotes ability of mesenchymal stromal cells to suppress T-cell proliferation. Expands regulatory T-cells and induces cytotoxic T-cell apoptosis following virus infection. Activates ERK1/2 phosphorylation inducing cytokine (IL-6, IL-8, IL-12) and chemokine (CCL2) production in mast and dendritic cells. Inhibits degranulation and induces apoptosis of mast cells. Induces maturation and migration of dendritic cells. Inhibits natural killer (NK) cell function. Can transform NK cell phenotype from peripheral to decidual during pregnancy. Astrocyte derived galectin-9 enhances microglial TNF production. May play a role in thymocyte-epithelial interactions relevant to the biology of the thymus. May provide the molecular basis for urate flux across cell membranes, allowing urate that is formed during purine metabolism to efflux from cells and serving as an electrogenic transporter that plays an important role in renal and gastrointestinal urate excretion. Highly selective to the anion urate. This Rattus norvegicus (Rat) protein is Galectin-9 (Lgals9).